Consider the following 1284-residue polypeptide: ATP-dependent helicase fft2 (1284 aa).

Composition is skewed to polar residues over residues 1–10 (MLPYNSNYLS) and 20–57 (ENPQ…AMYG). Disordered stretches follow at residues 1-57 (MLPY…AMYG), 185-252 (AQPP…LPPV), 317-339 (KQSP…QSQK), 353-388 (STQA…EEPE), and 446-465 (PDDV…KNPM). Positions 201-241 (RSNSRSSARSTARSAPRSTQRSRSSSANPVTTPPVNNTLLT) are enriched in low complexity. 2 stretches are compositionally biased toward polar residues: residues 320–339 (PVAS…QSQK) and 353–372 (STQA…ASKK). Residue serine 323 is modified to Phosphoserine. The segment covering 376–388 (EEDEFYDSEEEPE) has biased composition (acidic residues). Serine 383 carries the post-translational modification Phosphoserine. Residues 562 to 730 (HLLYQQKLSG…VSLLAFILPN (169 aa)) enclose the Helicase ATP-binding domain. 575–582 (DEMGLGKT) contacts ATP. The short motif at 681–684 (DEGH) is the DEGH box element. The interval 816 to 839 (QQLRRDDKRNKRSKNDEESDGKSL) is disordered. A compositionally biased stretch (basic and acidic residues) spans 818 to 831 (LRRDDKRNKRSKND). A Helicase C-terminal domain is found at 928–1079 (VLKELLPKMK…SLSSDGKDRE (152 aa)). The tract at residues 1088–1284 (DMLDEENNGN…SEVDNNAAKD (197 aa)) is disordered. The span at 1095–1107 (NGNNTKPEITGNE) shows a compositional bias: polar residues. Residues 1143-1177 (EKTDLADGDEKANIKTEMKSETVEGDNKELRETMK) show a composition bias toward basic and acidic residues. Residues 1180–1194 (NVQTDSNAAVPSSKS) are compositionally biased toward polar residues. Basic and acidic residues-rich tracts occupy residues 1243–1256 (QLEK…KKPD) and 1266–1284 (EEEK…AAKD).

This sequence belongs to the SNF2/RAD54 helicase family.

The protein resides in the cytoplasm. Its subcellular location is the nucleus. The enzyme catalyses ATP + H2O = ADP + phosphate + H(+). In terms of biological role, DNA helicase that possesses intrinsic ATP-dependent nucleosome-remodeling activity and is required for heterochromatin organization. In Schizosaccharomyces pombe (strain 972 / ATCC 24843) (Fission yeast), this protein is ATP-dependent helicase fft2 (fft2).